The following is a 298-amino-acid chain: MVDEILKLKKEKGYIILAHNYQIPELQDIADFVGDSLQLARKAMELSEKKILFLGVDFMAELVKILNPDKKVIVPDRSATCPMANRLTPEIIREYREKFPDAPVVLYVNSTSECKTLADVICTSANAVEVVKKLDSSVVIFGPDRNLGEYVAEKTGKKVITIPENGHCPVHQFNAESIDAVRKKYPDAKVIVHPECPKPVRDKADYVGSTGQMEKIPEKDPSRIFVIGTEIGMIHKLKKKFPDREFVPLEMAVCVNMKKNTLENTLHALQTESFEVILPKEVIEKAKKPILRMFELMG.

2 residues coordinate iminosuccinate: histidine 19 and serine 36. Position 81 (cysteine 81) interacts with [4Fe-4S] cluster. Residues 107–109 (YVN) and serine 124 each bind iminosuccinate. Residue cysteine 168 coordinates [4Fe-4S] cluster. Iminosuccinate-binding positions include 193–195 (HPE) and threonine 210. Cysteine 254 contributes to the [4Fe-4S] cluster binding site.

The protein belongs to the quinolinate synthase family. Type 2 subfamily. It depends on [4Fe-4S] cluster as a cofactor.

The protein resides in the cytoplasm. The enzyme catalyses iminosuccinate + dihydroxyacetone phosphate = quinolinate + phosphate + 2 H2O + H(+). Its pathway is cofactor biosynthesis; NAD(+) biosynthesis; quinolinate from iminoaspartate: step 1/1. With respect to regulation, inhibited by 4,5 dithiohydroxyphthalic acid (DTHPA) analogs, which bind to the catalytic iron site of the [4Fe-4S] cluster. In terms of biological role, catalyzes the condensation of iminoaspartate with dihydroxyacetone phosphate to form quinolinate. The polypeptide is Quinolinate synthase (Thermotoga maritima (strain ATCC 43589 / DSM 3109 / JCM 10099 / NBRC 100826 / MSB8)).